Here is a 197-residue protein sequence, read N- to C-terminus: Shikimate kinase (197 aa).

Position 14-19 (Gly14–Thr19) interacts with ATP. Ser18 provides a ligand contact to Mg(2+). 3 residues coordinate substrate: Asp36, Arg60, and Gly82. Arg120 provides a ligand contact to ATP. Arg147 provides a ligand contact to substrate.

It belongs to the shikimate kinase family. As to quaternary structure, monomer. Mg(2+) serves as cofactor.

The protein localises to the cytoplasm. The catalysed reaction is shikimate + ATP = 3-phosphoshikimate + ADP + H(+). It participates in metabolic intermediate biosynthesis; chorismate biosynthesis; chorismate from D-erythrose 4-phosphate and phosphoenolpyruvate: step 5/7. Catalyzes the specific phosphorylation of the 3-hydroxyl group of shikimic acid using ATP as a cosubstrate. The protein is Shikimate kinase of Prosthecochloris aestuarii (strain DSM 271 / SK 413).